Reading from the N-terminus, the 677-residue chain is Amine oxidase [copper-containing] alpha 2, peroxisomal (677 aa).

Residue 320–331 (YLDCGEFGCGQT) coordinates substrate. Aspartate 322 acts as the Proton acceptor in catalysis. The cysteines at positions 341 and 367 are disulfide-linked. 407–412 (VGNYDY) lines the substrate pocket. The active-site Schiff-base intermediate with substrate; via topaquinone is tyrosine 410. At tyrosine 410 the chain carries 2',4',5'-topaquinone. Histidine 466 and histidine 468 together coordinate Cu cation. Mn(2+) contacts are provided by aspartate 477, aspartate 617, and isoleucine 618. Histidine 628 is a Cu cation binding site.

Belongs to the copper/topaquinone oxidase family. As to quaternary structure, homodimer. Cu cation is required as a cofactor. Requires Zn(2+) as cofactor. The cofactor is L-topaquinone. Post-translationally, topaquinone (TPQ) is generated by copper-dependent autoxidation of a specific tyrosyl residue. Expressed exclusively in leaves.

It is found in the peroxisome. It catalyses the reaction a primary methyl amine + O2 + H2O = an aldehyde + H2O2 + NH4(+). It participates in amine and polyamine degradation; putrescine degradation. Its function is as follows. Copper amine oxidase that can use putrescine and spermidine as substrates. Involved in putrescine catabolism in peroxisomes in response to salt stress. Regulates arginine-dependent nitric oxide (NO) production, a key signaling molecule regulating a wide range of physiological processes including responses to salt stress, by influencing arginine bioavailability. Modulates primary root growth. The protein is Amine oxidase [copper-containing] alpha 2, peroxisomal of Arabidopsis thaliana (Mouse-ear cress).